Here is a 125-residue protein sequence, read N- to C-terminus: Hydrogenase maturation factor HypA (125 aa).

Ni(2+) is bound at residue histidine 2. The Zn(2+) site is built by cysteine 73, cysteine 76, cysteine 96, and cysteine 99.

It belongs to the HypA/HybF family.

In terms of biological role, involved in the maturation of [NiFe] hydrogenases. Required for nickel insertion into the metal center of the hydrogenase. This chain is Hydrogenase maturation factor HypA, found in Methanobrevibacter smithii (strain ATCC 35061 / DSM 861 / OCM 144 / PS).